Here is a 149-residue protein sequence, read N- to C-terminus: Large ribosomal subunit protein bL9 (149 aa).

The protein belongs to the bacterial ribosomal protein bL9 family.

Binds to the 23S rRNA. This Fervidobacterium nodosum (strain ATCC 35602 / DSM 5306 / Rt17-B1) protein is Large ribosomal subunit protein bL9.